The chain runs to 614 residues: Aspartate--tRNA ligase (614 aa).

Residue glutamate 174 participates in L-aspartate binding. Residues 198-201 (QLFK) are aspartate. An L-aspartate-binding site is contributed by arginine 220. ATP-binding positions include 220–222 (RDE) and glutamine 229. Histidine 448 contacts L-aspartate. Glutamate 482 lines the ATP pocket. Arginine 489 contacts L-aspartate. 534-537 (GLDR) contributes to the ATP binding site. The interval 587-614 (YEDSVKETEQRLEKEAQEDADKNSTWDE) is disordered.

The protein belongs to the class-II aminoacyl-tRNA synthetase family. Type 1 subfamily. Homodimer.

Its subcellular location is the cytoplasm. The enzyme catalyses tRNA(Asp) + L-aspartate + ATP = L-aspartyl-tRNA(Asp) + AMP + diphosphate. Functionally, catalyzes the attachment of L-aspartate to tRNA(Asp) in a two-step reaction: L-aspartate is first activated by ATP to form Asp-AMP and then transferred to the acceptor end of tRNA(Asp). In Lactobacillus johnsonii (strain CNCM I-12250 / La1 / NCC 533), this protein is Aspartate--tRNA ligase.